Reading from the N-terminus, the 294-residue chain is Glutamyl-Q tRNA(Asp) synthetase (294 aa).

Residues 7–11 (RFAPS) and glutamate 43 contribute to the L-glutamate site. A 'HIGH' region motif is present at residues 10-20 (PSPSGPLHFGS). Residues cysteine 99, cysteine 101, tyrosine 113, and cysteine 117 each coordinate Zn(2+). Residues tyrosine 168 and arginine 186 each contribute to the L-glutamate site. The 'KMSKS' region motif lies at 224 to 228 (KLSKQ). Lysine 227 contacts ATP.

This sequence belongs to the class-I aminoacyl-tRNA synthetase family. GluQ subfamily. It depends on Zn(2+) as a cofactor.

Catalyzes the tRNA-independent activation of glutamate in presence of ATP and the subsequent transfer of glutamate onto a tRNA(Asp). Glutamate is transferred on the 2-amino-5-(4,5-dihydroxy-2-cyclopenten-1-yl) moiety of the queuosine in the wobble position of the QUC anticodon. In Vibrio parahaemolyticus serotype O3:K6 (strain RIMD 2210633), this protein is Glutamyl-Q tRNA(Asp) synthetase.